Reading from the N-terminus, the 684-residue chain is Phenoloxidase 2 (684 aa).

A propeptide spanning residues 1-50 is cleaved from the precursor; it reads MADKKNLLLLFDHPTEPVFMDKGKRVTVFDVPDSFLTDRYRPISNEVQSR. Residues histidine 208, histidine 212, and histidine 238 each contribute to the Cu cation site. Residue glutamate 350 is the Proton acceptor of the active site. Residues histidine 365, histidine 369, and histidine 405 each contribute to the Cu cation site. Asparagine 448 and asparagine 492 each carry an N-linked (GlcNAc...) asparagine glycan. 2 cysteine pairs are disulfide-bonded: cysteine 581-cysteine 623 and cysteine 583-cysteine 630. N-linked (GlcNAc...) asparagine glycosylation is found at asparagine 665 and asparagine 677.

This sequence belongs to the tyrosinase family. Cu(2+) serves as cofactor. Post-translationally, upon activation, a trypsin type protease cleaves prophenol oxidase to yield the active enzyme.

It is found in the secreted. It catalyses the reaction 2 L-dopa + O2 = 2 L-dopaquinone + 2 H2O. The enzyme catalyses L-tyrosine + O2 = L-dopaquinone + H2O. Functionally, this is a copper-containing oxidase that functions in the formation of pigments such as melanins and other polyphenolic compounds. Catalyzes the rate-limiting conversions of tyrosine to DOPA, DOPA to DOPA-quinone and possibly 5,6 dihydroxyindole to indole-5'6 quinonee. In Drosophila melanogaster (Fruit fly), this protein is Phenoloxidase 2 (PPO2).